A 204-amino-acid polypeptide reads, in one-letter code: MRVLGIDPGLTRCGVGVVEGVAGRPLTMIGVGVVRTSSDAELGDRLVAVERGIEQWLDEHSPGYVAVERVFAQHNVRTVMGTAQASAVAMLCAARRGIPVALHTPSEVKAAVTGSGRADKAQVGAMVTRLLRLDAPPKPADAADALALAICHIWRAPAQNRLQQAVAAHRTSGASRTPGAAGTPGPSRTPGAPGTSRTLKGRTA.

Active-site residues include D7, E68, and D141. Mg(2+) contacts are provided by D7, E68, and D141. Residues 164 to 204 (QAVAAHRTSGASRTPGAAGTPGPSRTPGAPGTSRTLKGRTA) form a disordered region.

This sequence belongs to the RuvC family. Homodimer which binds Holliday junction (HJ) DNA. The HJ becomes 2-fold symmetrical on binding to RuvC with unstacked arms; it has a different conformation from HJ DNA in complex with RuvA. In the full resolvosome a probable DNA-RuvA(4)-RuvB(12)-RuvC(2) complex forms which resolves the HJ. Mg(2+) serves as cofactor.

The protein localises to the cytoplasm. It carries out the reaction Endonucleolytic cleavage at a junction such as a reciprocal single-stranded crossover between two homologous DNA duplexes (Holliday junction).. Its function is as follows. The RuvA-RuvB-RuvC complex processes Holliday junction (HJ) DNA during genetic recombination and DNA repair. Endonuclease that resolves HJ intermediates. Cleaves cruciform DNA by making single-stranded nicks across the HJ at symmetrical positions within the homologous arms, yielding a 5'-phosphate and a 3'-hydroxyl group; requires a central core of homology in the junction. The consensus cleavage sequence is 5'-(A/T)TT(C/G)-3'. Cleavage occurs on the 3'-side of the TT dinucleotide at the point of strand exchange. HJ branch migration catalyzed by RuvA-RuvB allows RuvC to scan DNA until it finds its consensus sequence, where it cleaves and resolves the cruciform DNA. This is Crossover junction endodeoxyribonuclease RuvC from Streptomyces griseus subsp. griseus (strain JCM 4626 / CBS 651.72 / NBRC 13350 / KCC S-0626 / ISP 5235).